Reading from the N-terminus, the 185-residue chain is Thymidine kinase (185 aa).

8–15 (GPMYSGKT) lines the ATP pocket. Glutamate 85 serves as the catalytic Proton acceptor. Phenylalanine 117 contributes to the substrate binding site. 2 residues coordinate Zn(2+): cysteine 142 and cysteine 145. Substrate is bound at residue 161–165 (IIEIG). Positions 174 and 177 each coordinate Zn(2+).

It belongs to the thymidine kinase family.

The enzyme catalyses thymidine + ATP = dTMP + ADP + H(+). The protein is Thymidine kinase (TK) of Choristoneura fumiferana entomopoxvirus (CfEPV).